A 500-amino-acid polypeptide reads, in one-letter code: NAD(P)H-quinone oxidoreductase chain 4, chloroplastic (500 aa).

Transmembrane regions (helical) follow at residues 4-24, 37-57, 87-107, 111-131, 134-154, 167-187, 208-228, 242-262, 272-292, 305-325, 330-350, 386-406, 416-436, and 462-482; these read FPWLTIIVVFPILTGSLIFLL, LCICILELLLTTYTFCYHFQL, IGPILLTGFITTLATLAAWPV, AQLFHFLMLAMYSGQIGSFSS, LLLFFLMWEFELIPVYLLLSM, FILYTAGGSIFLLIGVLGIGL, ALEVIFYVGFLIAFAVKLPII, HYSTCMLLAGILLKMGAYGLV, AHCLFSPGLIIVGAIQIIYAA, IAYSSISHMGFIIIGIGSLSD, GAILQIISHGFIGAALFFLAG, LALPGLSGFVAELLVFFGIIT, ILIAFLMAIGMILTPIYSLSM, and LFVSISLLLPIIGIGIYPDFV.

This sequence belongs to the complex I subunit 4 family.

It localises to the plastid. The protein resides in the chloroplast thylakoid membrane. It carries out the reaction a plastoquinone + NADH + (n+1) H(+)(in) = a plastoquinol + NAD(+) + n H(+)(out). The catalysed reaction is a plastoquinone + NADPH + (n+1) H(+)(in) = a plastoquinol + NADP(+) + n H(+)(out). The protein is NAD(P)H-quinone oxidoreductase chain 4, chloroplastic of Oenothera biennis (German evening primrose).